A 361-amino-acid polypeptide reads, in one-letter code: tRNA/tmRNA (uracil-C(5))-methyltransferase (361 aa).

S-adenosyl-L-methionine is bound by residues Q185, Y213, N218, E234, and D294. C319 functions as the Nucleophile in the catalytic mechanism. Residue E353 is the Proton acceptor of the active site.

It belongs to the class I-like SAM-binding methyltransferase superfamily. RNA M5U methyltransferase family. TrmA subfamily.

The enzyme catalyses uridine(54) in tRNA + S-adenosyl-L-methionine = 5-methyluridine(54) in tRNA + S-adenosyl-L-homocysteine + H(+). It carries out the reaction uridine(341) in tmRNA + S-adenosyl-L-methionine = 5-methyluridine(341) in tmRNA + S-adenosyl-L-homocysteine + H(+). Its function is as follows. Dual-specificity methyltransferase that catalyzes the formation of 5-methyluridine at position 54 (m5U54) in all tRNAs, and that of position 341 (m5U341) in tmRNA (transfer-mRNA). The sequence is that of tRNA/tmRNA (uracil-C(5))-methyltransferase from Pseudomonas putida (strain ATCC 700007 / DSM 6899 / JCM 31910 / BCRC 17059 / LMG 24140 / F1).